Here is a 604-residue protein sequence, read N- to C-terminus: Inositol-3-phosphate synthase 1 (604 aa).

Residues G88, G89, N90, N91, D163, S198, V199, Q210, R213, S251, G252, N253, T254, S303, D327, L328, T330, N361, N362, D363, K376, G456, D457, D485, and S486 each contribute to the NAD(+) site.

It belongs to the myo-inositol 1-phosphate synthase family. It depends on NAD(+) as a cofactor.

The catalysed reaction is D-glucose 6-phosphate = 1D-myo-inositol 3-phosphate. It participates in polyol metabolism; myo-inositol biosynthesis; myo-inositol from D-glucose 6-phosphate: step 1/2. Functionally, key enzyme in myo-inositol biosynthesis pathway that catalyzes the conversion of glucose 6-phosphate to 1-myo-inositol 1-phosphate in a NAD-dependent manner. Rate-limiting enzyme in the synthesis of all inositol-containing compounds. De novo-synthesized myo-inositol is essential for incorporation into GPI (glycosylphosphatidylinositol) glycolipids during intra-erythrocytic development. The chain is Inositol-3-phosphate synthase 1 from Plasmodium falciparum (isolate 3D7).